A 250-amino-acid chain; its full sequence is DNA repair protein RecO (250 aa).

Belongs to the RecO family.

In terms of biological role, involved in DNA repair and RecF pathway recombination. The protein is DNA repair protein RecO of Rhodopseudomonas palustris (strain ATCC BAA-98 / CGA009).